We begin with the raw amino-acid sequence, 300 residues long: Cation-efflux pump FieF (300 aa).

Transmembrane regions (helical) follow at residues 12–32, 40–60, 82–102, and 114–134; these read AALA…VAWY, LAAL…LLVV, AALA…LTGF, and PGVG…LVTY. Zn(2+) is bound by residues D45 and D49. H153 and D157 together coordinate Zn(2+). Transmembrane regions (helical) follow at residues 155–175 and 178–198; these read QSDV…WYGF and ADAL…LRMG.

This sequence belongs to the cation diffusion facilitator (CDF) transporter (TC 2.A.4) family. FieF subfamily. As to quaternary structure, homodimer.

Its subcellular location is the cell inner membrane. The enzyme catalyses Zn(2+)(in) + H(+)(out) = Zn(2+)(out) + H(+)(in). The catalysed reaction is Cd(2+)(in) + H(+)(out) = Cd(2+)(out) + H(+)(in). It catalyses the reaction Fe(2+)(in) + H(+)(out) = Fe(2+)(out) + H(+)(in). In terms of biological role, divalent metal cation transporter which exports Zn(2+), Cd(2+) and possibly Fe(2+). May be involved in zinc and iron detoxification by efflux. The protein is Cation-efflux pump FieF of Serratia proteamaculans (strain 568).